The chain runs to 429 residues: Endo-1,4-beta-xylanase 1 (429 aa).

Positions 1–19 (MQTKSILTAALLAAAPASA) are cleaved as a signal peptide. Residues 43–336 (NSDQQYNRIL…KPAWTSISSV (294 aa)) form the GH10 domain. Glutamate 150 (proton donor) is an active-site residue. The active-site Nucleophile is the glutamate 257. Cysteine 286 and cysteine 292 are disulfide-bonded. A disordered region spans residues 364 to 395 (TTPPPISSPIVPSTTTTSAVPTTTVSPPEPEQ). Residues 371-389 (SPIVPSTTTTSAVPTTTVS) are compositionally biased toward low complexity. Positions 393–429 (PEQTRWGQCGGIGWNGPTKCQSPWTCTRLNDWYFQCL) constitute a CBM1 domain.

Belongs to the glycosyl hydrolase 10 (cellulase F) family.

Its subcellular location is the secreted. The enzyme catalyses Endohydrolysis of (1-&gt;4)-beta-D-xylosidic linkages in xylans.. It functions in the pathway glycan degradation; xylan degradation. Functionally, endo-1,4-beta-xylanase involved in the hydrolysis of xylan, a major structural heterogeneous polysaccharide found in plant biomass representing the second most abundant polysaccharide in the biosphere, after cellulose. The sequence is that of Endo-1,4-beta-xylanase 1 from Humicola insolens (Soft-rot fungus).